Consider the following 85-residue polypeptide: Small ribosomal subunit protein eS21 (85 aa).

It belongs to the eukaryotic ribosomal protein eS21 family. As to quaternary structure, component of the 40S small ribosomal subunit.

It is found in the cytoplasm. It localises to the cytosol. The protein resides in the rough endoplasmic reticulum. This Branchiostoma belcheri (Amphioxus) protein is Small ribosomal subunit protein eS21 (RPS21).